Reading from the N-terminus, the 337-residue chain is Holliday junction branch migration complex subunit RuvB (337 aa).

The disordered stretch occupies residues 1–20; that stretch reads MQTRFVSPVNHDEEQDEPSV. The segment at 1 to 181 is large ATPase domain (RuvB-L); it reads MQTRFVSPVN…FGIILRLDLY (181 aa). Residues Arg21, Gly62, Lys65, Thr66, Thr67, 128–130, Arg171, Tyr181, and Arg218 contribute to the ATP site; that span reads EDY. Thr66 contributes to the Mg(2+) binding site. The small ATPAse domain (RuvB-S) stretch occupies residues 182 to 252; the sequence is DPSELTVIVT…IANTALFALG (71 aa). Residues 255–337 form a head domain (RuvB-H) region; sequence QKGLDILDRR…SHTRDLTSFL (83 aa). Residues Arg310 and Arg315 each contribute to the DNA site.

Belongs to the RuvB family. In terms of assembly, homohexamer. Forms an RuvA(8)-RuvB(12)-Holliday junction (HJ) complex. HJ DNA is sandwiched between 2 RuvA tetramers; dsDNA enters through RuvA and exits via RuvB. An RuvB hexamer assembles on each DNA strand where it exits the tetramer. Each RuvB hexamer is contacted by two RuvA subunits (via domain III) on 2 adjacent RuvB subunits; this complex drives branch migration. In the full resolvosome a probable DNA-RuvA(4)-RuvB(12)-RuvC(2) complex forms which resolves the HJ.

Its subcellular location is the cytoplasm. It catalyses the reaction ATP + H2O = ADP + phosphate + H(+). In terms of biological role, the RuvA-RuvB-RuvC complex processes Holliday junction (HJ) DNA during genetic recombination and DNA repair, while the RuvA-RuvB complex plays an important role in the rescue of blocked DNA replication forks via replication fork reversal (RFR). RuvA specifically binds to HJ cruciform DNA, conferring on it an open structure. The RuvB hexamer acts as an ATP-dependent pump, pulling dsDNA into and through the RuvAB complex. RuvB forms 2 homohexamers on either side of HJ DNA bound by 1 or 2 RuvA tetramers; 4 subunits per hexamer contact DNA at a time. Coordinated motions by a converter formed by DNA-disengaged RuvB subunits stimulates ATP hydrolysis and nucleotide exchange. Immobilization of the converter enables RuvB to convert the ATP-contained energy into a lever motion, pulling 2 nucleotides of DNA out of the RuvA tetramer per ATP hydrolyzed, thus driving DNA branch migration. The RuvB motors rotate together with the DNA substrate, which together with the progressing nucleotide cycle form the mechanistic basis for DNA recombination by continuous HJ branch migration. Branch migration allows RuvC to scan DNA until it finds its consensus sequence, where it cleaves and resolves cruciform DNA. This chain is Holliday junction branch migration complex subunit RuvB, found in Methanospirillum hungatei JF-1 (strain ATCC 27890 / DSM 864 / NBRC 100397 / JF-1).